The chain runs to 436 residues: Drebrin-like protein (436 aa).

In terms of domain architecture, ADF-H spans 2–133; sequence AVNLSRNGPA…EPECIMEKVA (132 aa). Residue threonine 26 is modified to Phosphothreonine. Position 160 is a phosphoserine (serine 160). Position 176 is an N6-acetyllysine (lysine 176). Positions 179–233 form a coiled coil; it reads FWAKAEKEEENRRLEEKRRAEEERQRLEEERRERELQEAARREQRYQEQHRSAGA. Basic and acidic residues-rich tracts occupy residues 185–229 and 264–275; these read KEEE…EQHR and HPREIFKQKERA. Residues 185–341 are disordered; the sequence is KEEENRRLEE…AQTEEEPTYE (157 aa). Over residues 276–286 the composition is skewed to polar residues; it reads MSTTSVTSSQP. 4 positions are modified to phosphoserine: serine 277, serine 280, serine 283, and serine 291. Residues 294 to 303 show a composition bias toward polar residues; it reads LQKQLTQPET. Residue lysine 296 is modified to N6-acetyllysine. Threonine 299 bears the Phosphothreonine mark. Phosphotyrosine is present on residues tyrosine 340 and tyrosine 350. Residues 377-436 enclose the SH3 domain; it reads GQGLCARALYDYQAADDTEISFDPENLITGIEVIDEGWWRGYGPDGHFGMFPANYVELIE.

This sequence belongs to the ABP1 family. Interacts with SHANK3, SYN1 and PRAM1. Interacts with SHANK2. Interacts with FGD1, DNM1 and MAP4K1. Interacts with ANKRD54. Interacts with COBL. Interacts with WASL and WIPF1. In terms of tissue distribution, detected in hippocampus neurons and in the Purkinje cell layer in cerebellum (at protein level). Predominantly expressed in brain, thymus and spleen. Also found in testis, heart and lung. Little or no expression detected in ovary or muscle.

It is found in the cytoplasm. The protein localises to the cytoskeleton. It localises to the cell projection. The protein resides in the lamellipodium. Its subcellular location is the ruffle. It is found in the cell cortex. The protein localises to the cytosol. It localises to the synapse. The protein resides in the perikaryon. Its subcellular location is the neuron projection. It is found in the cell membrane. The protein localises to the cytoplasmic vesicle. It localises to the clathrin-coated vesicle membrane. The protein resides in the golgi apparatus membrane. Its subcellular location is the podosome. It is found in the early endosome. The protein localises to the dendrite. It localises to the postsynaptic density. Its function is as follows. Adapter protein that binds F-actin and DNM1, and thereby plays a role in receptor-mediated endocytosis. Plays a role in the reorganization of the actin cytoskeleton, formation of cell projections, such as neurites, in neuron morphogenesis and synapse formation via its interaction with WASL and COBL. Does not bind G-actin and promote actin polymerization by itself. Required for the formation of organized podosome rosettes. May act as a common effector of antigen receptor-signaling pathways in leukocytes. Acts as a key component of the immunological synapse that regulates T-cell activation by bridging TCRs and the actin cytoskeleton to gene activation and endocytic processes. The polypeptide is Drebrin-like protein (Mus musculus (Mouse)).